Consider the following 222-residue polypeptide: 4'-phosphopantetheinyl transferase Npt (222 aa).

3 residues coordinate Mg(2+): Asp105, Glu107, and Glu147.

This sequence belongs to the P-Pant transferase superfamily. In terms of assembly, monomer. The cofactor is Mg(2+).

It carries out the reaction apo-[ACP] + CoA = holo-[ACP] + adenosine 3',5'-bisphosphate + H(+). In terms of biological role, catalyzes the transfer of the 4'-phosphopantetheine moiety from coenzyme A to a serine residue in the acyl-carrier domain of carboxylic acid reductase Car, thus converting apo-Car to fully active holo-Car. Is probably also responsible for the activation of other proteins with phosphopantetheine attachment sites. The protein is 4'-phosphopantetheinyl transferase Npt (npt) of Nocardia iowensis.